The sequence spans 1334 residues: WASH complex subunit 2 (1334 aa).

A sufficient for interaction with WASHC3, WASHC4 and WASHC5; required for interaction with WASHC1 region spans residues 1–219 (MNRTSPDSER…VGSDRGSIVD (219 aa)). Serine 157, serine 159, serine 204, serine 205, and serine 209 each carry phosphoserine. The segment covering 201–213 (GELSSEEGSVGSD) has biased composition (low complexity). Positions 201–471 (GELSSEEGSV…SKPSKTDKVK (271 aa)) are disordered. Composition is skewed to acidic residues over residues 219-232 (DSED…SDED) and 249-274 (SDEE…EDIE). Serine 284 bears the Phosphoserine mark. Residues 289-324 (LAARIKGDISNQRKEGQTDGKPQKTVKEKKERRTPA) show a composition bias toward basic and acidic residues. A Phosphothreonine modification is found at threonine 322. Positions 347 to 594 (SRGGLFSNGQ…QTSSLQPQSQ (248 aa)) are sufficient for interaction with CCDC93. Residues 348-1334 (RGGLFSNGQG…DDPLNAFGSQ (987 aa)) are interaction with VPS35. The LFa 1 signature appears at 358-368 (LFDDEDESDLF). Serine 388 carries the post-translational modification Phosphoserine. Short sequence motifs (LFa) lie at residues 441–457 (LFDD…NNFF) and 476–485 (IFDDDEGDLF). Positions 442 to 454 (FDDDDNDNDEDDN) are enriched in acidic residues. The segment at 492–650 (LPAASVSQTH…DSGATQGQEA (159 aa)) is disordered. The segment covering 513 to 530 (LPSSKNLKLVSETKTQKG) has biased composition (polar residues). Short sequence motifs (LFa) lie at residues 531–542 (LFSDEEDSEDLF) and 566–577 (LFGDEDEEDSLF). A phosphoserine mark is found at serine 533 and serine 538. Positions 541–561 (LFSSQSSSKPKSASLPSSQPP) are enriched in low complexity. Composition is skewed to polar residues over residues 584–594 (KQTSSLQPQSQ) and 601–611 (EQPSKKTSALL). 2 positions are modified to phosphoserine: serine 613 and serine 614. Residues 625–639 (SHTKLASDNKSKGEL) show a composition bias toward basic and acidic residues. Short sequence motifs (LFa) lie at residues 658–670 (LFED…VDLF) and 686–698 (LFED…SSLF). Residues 691 to 837 (AESGSSLFGL…SRPKSTGVFQ (147 aa)) are disordered. A phosphoserine mark is found at serine 723, serine 747, serine 752, serine 783, and serine 798. Residues 800 to 811 (FDEDEDKVEDES) show a composition bias toward acidic residues. The span at 818 to 830 (DGREKGLKTDSRP) shows a compositional bias: basic and acidic residues. 2 short sequence motifs (LFa) span residues 835–843 (VFQDEELLF) and 852–858 (DPDVDLF). 2 disordered regions span residues 862–948 (KKIR…PSSR) and 1014–1225 (AQAD…SKTH). Residues serine 870 and serine 873 each carry the phosphoserine modification. Positions 874–884 (LFGDDEDDDLF) match the LFa 10 motif. The segment covering 894–906 (PEKKGTLKKDHPV) has biased composition (basic and acidic residues). Over residues 908–919 (LKNQDPLDSTQG) the composition is skewed to polar residues. The tract at residues 932 to 1334 (QDSSGLTPFK…DDPLNAFGSQ (403 aa)) is interaction with phospholipids. The span at 1023–1041 (NKSRVKVRGKRRPQTRAAR) shows a compositional bias: basic residues. Positions 1024-1042 (KSRVKVRGKRRPQTRAARR) are required for interaction with F-actin-capping protein subunit alpha (CAPZA1 or CAPZA2 or CAPZA3). A phosphoserine mark is found at serine 1049, serine 1067, serine 1084, and serine 1109. 3 short sequence motifs (LFa) span residues 1124-1131 (LFDSGDIF), 1164-1178 (AFPD…EDLF), and 1194-1202 (LLEDEEDLF). Serine 1169, serine 1172, and serine 1173 each carry phosphoserine. Residues 1203 to 1225 (ADPRGKKNERKPDSHQDSVSKTH) show a composition bias toward basic and acidic residues. 3 consecutive short sequence motifs (LFa) follow at residues 1227–1233 (IFEDDIF), 1255–1263 (LFDDNIDIF), and 1283–1292 (MFDDDTDDIF). The segment at 1294-1334 (SGLQAKASKPKSQSAEAASEQRSEHKVASIFDDPLNAFGSQ) is disordered. A compositionally biased stretch (low complexity) spans 1297–1311 (QAKASKPKSQSAEAA). Residues 1323–1331 (IFDDPLNAF) carry the LFa 17 motif. At serine 1333 the chain carries Phosphoserine.

Belongs to the FAM21 family. Component of the WASH core complex also described as WASH regulatory complex (SHRC) composed of WASHC1, WASHC2, WASHC3, WASHC4 and WASHC5; in the complex interacts (via N-terminus) directly with WASHC1. The WASH core complex associates with the F-actin-capping protein dimer (formed by CAPZA1, CAPZA2 or CAPZA3 and CAPZB) in a transient or substoichiometric manner which was initially described as WASH complex. Interacts with VPS35; mediates the association with the retromer CSC complex. Interacts with FKBP15. Interacts with CCDC93, CCDC22, VPS35L; indicative for an association of the WASH core complex with the CCC and retriever complexes. Directly interacts with TBC1D23.

It localises to the early endosome membrane. It is found in the cell membrane. Acts as a component of the WASH core complex that functions as a nucleation-promoting factor (NPF) at the surface of endosomes, where it recruits and activates the Arp2/3 complex to induce actin polymerization, playing a key role in the fission of tubules that serve as transport intermediates during endosome sorting. Mediates the recruitment of the WASH core complex to endosome membranes via binding to phospholipids and VPS35 of the retromer CSC. Mediates the recruitment of the F-actin-capping protein dimer to the WASH core complex probably promoting localized F-actin polymerization needed for vesicle scission. Via its C-terminus binds various phospholipids, most strongly phosphatidylinositol 4-phosphate (PtdIns-(4)P), phosphatidylinositol 5-phosphate (PtdIns-(5)P) and phosphatidylinositol 3,5-bisphosphate (PtdIns-(3,5)P2). Involved in the endosome-to-plasma membrane trafficking and recycling of SNX27-retromer-dependent cargo proteins, such as GLUT1. Required for the association of DNAJC13, ENTR1, ANKRD50 with retromer CSC subunit VPS35. Required for the endosomal recruitment of CCC and retriever complexes subunits COMMD1 and CCDC93 as well as the retrievere complex subunit VPS35L. The protein is WASH complex subunit 2 of Mus musculus (Mouse).